Here is a 266-residue protein sequence, read N- to C-terminus: N-formylglutamate deformylase (266 aa).

The protein belongs to the N-formylglutamate deformylase family. In terms of assembly, monomer.

The enzyme catalyses N-formyl-L-glutamate + H2O = formate + L-glutamate. It functions in the pathway amino-acid degradation; L-histidine degradation into L-glutamate; L-glutamate from N-formimidoyl-L-glutamate (deiminase route): step 2/2. Its function is as follows. Catalyzes the hydrolysis of N-formyl-L-glutamate to formate and L-glutamate. Shows weak activity with N-formyl-L-glutamine. The chain is N-formylglutamate deformylase from Pseudomonas aeruginosa (strain ATCC 15692 / DSM 22644 / CIP 104116 / JCM 14847 / LMG 12228 / 1C / PRS 101 / PAO1).